Consider the following 218-residue polypeptide: Small ribosomal subunit protein uS5 (218 aa).

A disordered region spans residues 1-49; it reads MPGRQRRDGGSGPAGQNGPNTGDNRGGGDRRGGGRDDRRGGQSAEKSNH. The span at 26–49 shows a compositional bias: basic and acidic residues; the sequence is GGGDRRGGGRDDRRGGQSAEKSNH. One can recognise an S5 DRBM domain in the interval 49–112; it reads HIERVVTINR…EEARKSFFRV (64 aa).

The protein belongs to the universal ribosomal protein uS5 family. Part of the 30S ribosomal subunit. Contacts proteins S4 and S8.

Functionally, with S4 and S12 plays an important role in translational accuracy. Its function is as follows. Located at the back of the 30S subunit body where it stabilizes the conformation of the head with respect to the body. The sequence is that of Small ribosomal subunit protein uS5 from Rhodococcus jostii (strain RHA1).